The sequence spans 146 residues: Ribonuclease VapC41 (146 aa).

Residues 3-142 enclose the PINc domain; it reads LCDTNIWLAL…FTQYGGIELR (140 aa). Mg(2+) is bound by residues Asp5 and Asp112.

The protein belongs to the PINc/VapC protein family. The cofactor is Mg(2+).

Toxic component of a type II toxin-antitoxin (TA) system. An RNase. Its toxic effect is neutralized by coexpression with cognate antitoxin VapB41. This Mycobacterium tuberculosis (strain CDC 1551 / Oshkosh) protein is Ribonuclease VapC41.